A 418-amino-acid chain; its full sequence is Deubiquitinase and deneddylase Dub1 (418 aa).

The span at 1-10 (MLSPTNSTSK) shows a compositional bias: polar residues. Residues 1-23 (MLSPTNSTSKKAPVPPQDSSKPV) are disordered. Residues 40–60 (TALAVLLVVVTLGLILLFYSF) form a helical membrane-spanning segment. A disordered region spans residues 72–143 (TRPSTKEQPT…PPLPPKAPKP (72 aa)). Residues 86 to 141 (VPLPSPPLAVPRPSTPPPPVISRPSTPPAPTPAISPPSTPSAPKPSTPPPLPPKAP) show a composition bias toward pro residues. Residues His-288, Asp-305, and Cys-358 contribute to the active site.

This sequence belongs to the peptidase C48 family.

The protein localises to the secreted. The protein resides in the host cell. It localises to the membrane. In terms of biological role, effector proteins function to alter host cell physiology and promote bacterial survival in host tissues. This protease possesses deubiquitinating and deneddylating activities. The protein is Deubiquitinase and deneddylase Dub1 (cdu1) of Chlamydia trachomatis serovar D (strain ATCC VR-885 / DSM 19411 / UW-3/Cx).